Reading from the N-terminus, the 431-residue chain is Enolase (431 aa).

Gln-166 is a binding site for (2R)-2-phosphoglycerate. The active-site Proton donor is the Glu-208. Mg(2+) is bound by residues Asp-245, Glu-288, and Asp-315. The (2R)-2-phosphoglycerate site is built by Lys-340, Arg-369, Ser-370, and Lys-391. The Proton acceptor role is filled by Lys-340.

This sequence belongs to the enolase family. It depends on Mg(2+) as a cofactor.

The protein resides in the cytoplasm. It is found in the secreted. The protein localises to the cell surface. The catalysed reaction is (2R)-2-phosphoglycerate = phosphoenolpyruvate + H2O. The protein operates within carbohydrate degradation; glycolysis; pyruvate from D-glyceraldehyde 3-phosphate: step 4/5. Catalyzes the reversible conversion of 2-phosphoglycerate (2-PG) into phosphoenolpyruvate (PEP). It is essential for the degradation of carbohydrates via glycolysis. The protein is Enolase of Clostridium botulinum (strain Eklund 17B / Type B).